The following is a 195-amino-acid chain: MGLNFFMSRKIYYIKLLTGLYKKFIKALIVKKNESNNAYLLVETANFYNLVFSLQRSSLTQFKVLNDVCIVDYPEKIDRFELSYNLSSIKYNFRIFIKTYTSAYVPSISTLFNSANWIERECWDMFGVFFTNHPDLRRILTDYGFEGFPLRKDFPLTGYIEIRYDDEKANIVYEPLELSQEYRLFNFTSPWEKIK.

The protein belongs to the complex I 30 kDa subunit family. In terms of assembly, complex I is composed of about 30 different subunits.

The protein resides in the mitochondrion inner membrane. It catalyses the reaction a ubiquinone + NADH + 5 H(+)(in) = a ubiquinol + NAD(+) + 4 H(+)(out). Core subunit of the mitochondrial membrane respiratory chain NADH dehydrogenase (Complex I) that is believed to belong to the minimal assembly required for catalysis. Complex I functions in the transfer of electrons from NADH to the respiratory chain. The immediate electron acceptor for the enzyme is believed to be ubiquinone. The polypeptide is NADH-ubiquinone oxidoreductase subunit 9 (NAD9) (Acanthamoeba castellanii (Amoeba)).